Consider the following 472-residue polypeptide: 2-methylcitrate synthase, mitochondrial (472 aa).

The transit peptide at 1–29 directs the protein to the mitochondrion; sequence MALNLTSSRRALGSLKPLTRAAFSGVRGY. Residues Arg-75 and Lys-193 each contribute to the CoA site. His-271 contacts oxaloacetate. A CoA-binding site is contributed by Leu-306. Residue His-307 is part of the active site. CoA contacts are provided by Val-348, Gly-350, and Tyr-351. Oxaloacetate is bound by residues His-353 and Arg-362. His-353 is an active-site residue. CoA is bound by residues Thr-402, Lys-403, and Asn-408. Residue Asp-410 is part of the active site. Oxaloacetate-binding residues include Arg-436 and Arg-456.

Belongs to the citrate synthase family. In terms of assembly, homodimer.

It is found in the mitochondrion matrix. The enzyme catalyses propanoyl-CoA + oxaloacetate + H2O = (2S,3S)-2-methylcitrate + CoA + H(+). It carries out the reaction oxaloacetate + acetyl-CoA + H2O = citrate + CoA + H(+). Its pathway is organic acid metabolism; propanoate degradation. Its function is as follows. Component of the methylcitrate cycle that catalyzes the synthesis of (2S,3S)-2-methylcitrate from propionyl-CoA and oxaloacetate. Plays an important role in detoxification of propionyl-CoA, an inhibitor of both primary and secondary metabolism. Also has citrate synthase activity using as substrates acetyl-CoA and oxaloacetate. This Gibberella moniliformis (Maize ear and stalk rot fungus) protein is 2-methylcitrate synthase, mitochondrial.